The sequence spans 112 residues: Tyrosine-protein phosphatase 17 (112 aa).

The Tyrosine-protein phosphatase domain maps to 1-112 (WRMIWEHECC…QPHTAGPIVV (112 aa)). Asp82 contacts substrate.

This sequence belongs to the protein-tyrosine phosphatase family.

It carries out the reaction O-phospho-L-tyrosyl-[protein] + H2O = L-tyrosyl-[protein] + phosphate. The chain is Tyrosine-protein phosphatase 17 (STY-17) from Styela plicata (Wrinkled sea squirt).